Here is a 240-residue protein sequence, read N- to C-terminus: METEKKNSKEVALKHLAFVRIATIHILASVSNLYEYAKQNSGPLKSAVEKVEGAVTTVVTPVYQKFKDVPDSLLVFLDHKVGEVSYKFDEHAPPMAKKVVNQAHVLIYKATEKAQSFVKEARTGGPKAAFNYAATEYKFFVVTNSVKVWAKLNQYKPIHAMGDKALPVAAHFSSRYNDLVTDMTNMGYSLVGYLPLVPVDDIVKAYEKEDARRKKGGDTAGKKGETTDAADGDKSSSDSE.

The tract at residues 208-240 (KEDARRKKGGDTAGKKGETTDAADGDKSSSDSE) is disordered.

The protein belongs to the REF/SRPP family.

The chain is REF/SRPP-like protein At1g67360 from Arabidopsis thaliana (Mouse-ear cress).